The chain runs to 520 residues: DNA mismatch repair protein MutL (520 aa).

It belongs to the DNA mismatch repair MutL/HexB family.

In terms of biological role, this protein is involved in the repair of mismatches in DNA. It is required for dam-dependent methyl-directed DNA mismatch repair. May act as a 'molecular matchmaker', a protein that promotes the formation of a stable complex between two or more DNA-binding proteins in an ATP-dependent manner without itself being part of a final effector complex. The polypeptide is DNA mismatch repair protein MutL (Persephonella marina (strain DSM 14350 / EX-H1)).